A 155-amino-acid chain; its full sequence is Ribosome maturation factor RimP (155 aa).

It belongs to the RimP family.

The protein localises to the cytoplasm. Required for maturation of 30S ribosomal subunits. This chain is Ribosome maturation factor RimP, found in Prochlorococcus marinus (strain SARG / CCMP1375 / SS120).